The primary structure comprises 325 residues: Biotin synthase (325 aa).

The Radical SAM core domain occupies 36–254 (NEVQLAMLLS…IALARIMFPK (219 aa)). [4Fe-4S] cluster contacts are provided by Cys-51, Cys-55, and Cys-58. The [2Fe-2S] cluster site is built by Cys-95, Cys-126, Cys-186, and Arg-258.

The protein belongs to the radical SAM superfamily. Biotin synthase family. In terms of assembly, homodimer. Requires [4Fe-4S] cluster as cofactor. It depends on [2Fe-2S] cluster as a cofactor.

It carries out the reaction (4R,5S)-dethiobiotin + (sulfur carrier)-SH + 2 reduced [2Fe-2S]-[ferredoxin] + 2 S-adenosyl-L-methionine = (sulfur carrier)-H + biotin + 2 5'-deoxyadenosine + 2 L-methionine + 2 oxidized [2Fe-2S]-[ferredoxin]. It participates in cofactor biosynthesis; biotin biosynthesis; biotin from 7,8-diaminononanoate: step 2/2. Its function is as follows. Catalyzes the conversion of dethiobiotin (DTB) to biotin by the insertion of a sulfur atom into dethiobiotin via a radical-based mechanism. The polypeptide is Biotin synthase (Neorickettsia sennetsu (strain ATCC VR-367 / Miyayama) (Ehrlichia sennetsu)).